Consider the following 128-residue polypeptide: Small ribosomal subunit protein uS9 (128 aa).

The disordered stretch occupies residues 106–128 (PRVVERKKPGRPKARKRFQFSKR). Positions 113 to 128 (KPGRPKARKRFQFSKR) are enriched in basic residues.

The protein belongs to the universal ribosomal protein uS9 family.

This Porphyromonas gingivalis (strain ATCC 33277 / DSM 20709 / CIP 103683 / JCM 12257 / NCTC 11834 / 2561) protein is Small ribosomal subunit protein uS9.